Reading from the N-terminus, the 94-residue chain is Non-specific lipid-transfer protein C4 (94 aa).

The signal sequence occupies residues 1–26 (MAASKGNAAAAACALVLVLLAVGAEA). Disulfide bonds link Cys34–Cys72, Cys44–Cys59, Cys60–Cys85, and Cys70–Cys92. N-linked (GlcNAc...) asparagine glycosylation is present at Asn91.

This sequence belongs to the plant LTP family.

Its function is as follows. Lipid-transfer protein that may be regulated by the transcription factor UDT1 in developing anthers and play a role in tapetum development. The chain is Non-specific lipid-transfer protein C4 from Oryza sativa subsp. japonica (Rice).